Here is a 270-residue protein sequence, read N- to C-terminus: Formamidopyrimidine-DNA glycosylase (270 aa).

Pro2 serves as the catalytic Schiff-base intermediate with DNA. Residue Glu3 is the Proton donor of the active site. Residue Lys58 is the Proton donor; for beta-elimination activity of the active site. 3 residues coordinate DNA: His91, Arg110, and Arg151. The FPG-type zinc finger occupies 236 to 270 (FVYGRGGMPCKLCGTTLREAKLGQRASVYCPRCQR). The active-site Proton donor; for delta-elimination activity is the Arg260.

This sequence belongs to the FPG family. In terms of assembly, monomer. It depends on Zn(2+) as a cofactor.

It carries out the reaction Hydrolysis of DNA containing ring-opened 7-methylguanine residues, releasing 2,6-diamino-4-hydroxy-5-(N-methyl)formamidopyrimidine.. It catalyses the reaction 2'-deoxyribonucleotide-(2'-deoxyribose 5'-phosphate)-2'-deoxyribonucleotide-DNA = a 3'-end 2'-deoxyribonucleotide-(2,3-dehydro-2,3-deoxyribose 5'-phosphate)-DNA + a 5'-end 5'-phospho-2'-deoxyribonucleoside-DNA + H(+). Its function is as follows. Involved in base excision repair of DNA damaged by oxidation or by mutagenic agents. Acts as a DNA glycosylase that recognizes and removes damaged bases. Has a preference for oxidized purines, such as 7,8-dihydro-8-oxoguanine (8-oxoG). Has AP (apurinic/apyrimidinic) lyase activity and introduces nicks in the DNA strand. Cleaves the DNA backbone by beta-delta elimination to generate a single-strand break at the site of the removed base with both 3'- and 5'-phosphates. This Pseudomonas putida (strain W619) protein is Formamidopyrimidine-DNA glycosylase.